Reading from the N-terminus, the 400-residue chain is Phosphoglycerate kinase (400 aa).

Substrate-binding positions include 24 to 26 (DFN), Arg39, 62 to 65 (HFGR), Arg121, and Arg154. ATP-binding positions include Lys205, Gly296, Glu327, and 356–359 (GGDS).

Belongs to the phosphoglycerate kinase family. Monomer.

The protein localises to the cytoplasm. It carries out the reaction (2R)-3-phosphoglycerate + ATP = (2R)-3-phospho-glyceroyl phosphate + ADP. Its pathway is carbohydrate degradation; glycolysis; pyruvate from D-glyceraldehyde 3-phosphate: step 2/5. The chain is Phosphoglycerate kinase from Rippkaea orientalis (strain PCC 8801 / RF-1) (Cyanothece sp. (strain PCC 8801)).